Reading from the N-terminus, the 526-residue chain is MIRIGSNLIKQSIKNTNKSGISRFFTTGSNNSTNYKPESCVKEEPKGKSVNVEDLKDQEIIALVDKGEIQPHNLETRLPNNFQRAVHIRRKLLARDLQKEHQRALHAQAVVAAAEKAATSGEDPSSIQPVVPPTSNLDFEGSLTNLPVDHFDYTKVLGACCENVIGYIPIPVGVAGPILLDGKLVSIPMATTEGCLVASTHRGAKAITKSGGAKTVLLQSGMTRAPVCRLPSSIRAGELKQWIENQENFYQVASAFNSTSRFARLKSIKVVIAGRLVYLRFKSSTGDAMGMNMVSKGVEKALEVITEYFPEMEVLSLSGNVCTDKKPSSINWLEGRGKSVVAEAVISGDIVRDVLKTTVEALVSLNIDKNLIGSAMAGSIGGFNAHASNIVTALYIATGQDPAQNVESSNCITLMESINGGKDLYISVTMPSIEVGTVGGGTHLPAQSACLDLLKIRGANLERPGANSEQLARVVAAAVLSGELSLMSALAAGHLVRSHLKHNRKTEAPAPQADTISMTHNLPHSD.

Active-site charge relay system residues include Glu-193, Lys-325, and Asp-401. The active-site Proton donor is the His-499. The interval Asn-503–Asp-526 is disordered. Residues Asp-514–Asp-526 are compositionally biased toward polar residues.

Belongs to the HMG-CoA reductase family.

The catalysed reaction is (R)-mevalonate + 2 NADP(+) + CoA = (3S)-3-hydroxy-3-methylglutaryl-CoA + 2 NADPH + 2 H(+). The protein operates within metabolic intermediate biosynthesis; (R)-mevalonate biosynthesis; (R)-mevalonate from acetyl-CoA: step 3/3. This transmembrane glycoprotein is involved in the control of cholesterol biosynthesis. It is the rate-limiting enzyme of the sterol biosynthesis. In Dictyostelium discoideum (Social amoeba), this protein is 3-hydroxy-3-methylglutaryl-coenzyme A reductase 2 (hmgB).